Reading from the N-terminus, the 370-residue chain is Flagellar P-ring protein (370 aa).

The signal sequence occupies residues methionine 1–alanine 21.

It belongs to the FlgI family. In terms of assembly, the basal body constitutes a major portion of the flagellar organelle and consists of four rings (L,P,S, and M) mounted on a central rod.

It localises to the periplasm. Its subcellular location is the bacterial flagellum basal body. Functionally, assembles around the rod to form the L-ring and probably protects the motor/basal body from shearing forces during rotation. In Alteromonas mediterranea (strain DSM 17117 / CIP 110805 / LMG 28347 / Deep ecotype), this protein is Flagellar P-ring protein.